Consider the following 332-residue polypeptide: Malate dehydrogenase, cytoplasmic (332 aa).

NAD(+) is bound by residues 16–17 (QI), D43, and G90. R99 is a binding site for oxaloacetate. NAD(+)-binding residues include Q113 and N132. Positions 132, 163, 188, and 243 each coordinate oxaloacetate. The Proton acceptor role is filled by H188.

The protein belongs to the LDH/MDH superfamily. MDH type 2 family. In terms of assembly, monomer. As to expression, expressed constitutively in roots.

It is found in the cell membrane. The catalysed reaction is (S)-malate + NAD(+) = oxaloacetate + NADH + H(+). Malate dehydrogenase; catalyzes a reversible NAD-dependent dehydrogenase reaction involved in central metabolism and redox homeostasis. The polypeptide is Malate dehydrogenase, cytoplasmic (Zea mays (Maize)).